The chain runs to 285 residues: Nucleotide-binding protein Geob_2284 (285 aa).

Residue 8–15 (GLSGSGKS) coordinates ATP. GTP is bound at residue 59-62 (DIRG).

This sequence belongs to the RapZ-like family.

Displays ATPase and GTPase activities. The chain is Nucleotide-binding protein Geob_2284 from Geotalea daltonii (strain DSM 22248 / JCM 15807 / FRC-32) (Geobacter daltonii).